We begin with the raw amino-acid sequence, 339 residues long: Protein pelota homolog (339 aa).

The protein belongs to the eukaryotic release factor 1 family. Pelota subfamily. As to quaternary structure, monomer. It depends on a divalent metal cation as a cofactor.

Its subcellular location is the cytoplasm. May function in recognizing stalled ribosomes, interact with stem-loop structures in stalled mRNA molecules, and effect endonucleolytic cleavage of the mRNA. May play a role in the release non-functional ribosomes and degradation of damaged mRNAs. Has endoribonuclease activity. The protein is Protein pelota homolog (pelA) of Thermoplasma acidophilum (strain ATCC 25905 / DSM 1728 / JCM 9062 / NBRC 15155 / AMRC-C165).